The chain runs to 193 residues: Transmembrane protein 066L (193 aa).

Helical transmembrane passes span 14–34 (VLFA…GLVW) and 48–68 (LVVE…LVVV).

This sequence belongs to the IIV-6 357R family.

It is found in the membrane. This Invertebrate iridescent virus 3 (IIV-3) protein is Transmembrane protein 066L.